The sequence spans 392 residues: Histidinol-phosphate aminotransferase 2 (392 aa).

Position 228 is an N6-(pyridoxal phosphate)lysine (K228).

This sequence belongs to the class-II pyridoxal-phosphate-dependent aminotransferase family. Histidinol-phosphate aminotransferase subfamily. Homodimer. Requires pyridoxal 5'-phosphate as cofactor.

The enzyme catalyses L-histidinol phosphate + 2-oxoglutarate = 3-(imidazol-4-yl)-2-oxopropyl phosphate + L-glutamate. The protein operates within amino-acid biosynthesis; L-histidine biosynthesis; L-histidine from 5-phospho-alpha-D-ribose 1-diphosphate: step 7/9. The protein is Histidinol-phosphate aminotransferase 2 of Nitrosospira multiformis (strain ATCC 25196 / NCIMB 11849 / C 71).